The following is a 661-amino-acid chain: uncharacterized protein (661 aa).

The next 7 helical transmembrane spans lie at 37–57 (VFLGLILALMVVVVALTLFLS), 87–107 (INSPAPWIGLVALAMAGAVFI), 120–140 (WLLLGVLLSLLFVVNGLNVIL), 158–178 (VFWQFLWIYGIVIVVAIPIIV), 243–263 (LLDILDSILTLISFTAILYTI), 266–286 (TLMWGLIGYAVFGTVVAIAIG), and 341–361 (FNLLIIWQALISLFQLGYNYF). Residues 123 to 410 (LGVLLSLLFV…VTNQIQNITE (288 aa)) enclose the ABC transmembrane type-1 domain. One can recognise an ABC transporter domain in the interval 453 to 659 (VALENVTLSP…AEGRWQISPI (207 aa)). 487-494 (GPSGSGKS) contributes to the ATP binding site.

It belongs to the ABC transporter superfamily.

Its subcellular location is the cell inner membrane. This is an uncharacterized protein from Synechocystis sp. (strain ATCC 27184 / PCC 6803 / Kazusa).